The primary structure comprises 464 residues: DNA primase DnaG (464 aa).

In terms of domain architecture, Toprim spans 198–272 (DSIIVVEGRA…DVDYVARAPE (75 aa)). Residues glutamate 204, aspartate 246, and aspartate 248 each coordinate Mg(2+). Residues 315–333 (RESEGERQPRQVTKPEPEV) show a composition bias toward basic and acidic residues. The interval 315–351 (RESEGERQPRQVTKPEPEVVKAQPKAETPEEKREPAT) is disordered.

It belongs to the archaeal DnaG primase family. As to quaternary structure, forms a ternary complex with MCM helicase and DNA. Component of the archaeal exosome complex. Mg(2+) is required as a cofactor.

It carries out the reaction ssDNA + n NTP = ssDNA/pppN(pN)n-1 hybrid + (n-1) diphosphate.. In terms of biological role, RNA polymerase that catalyzes the synthesis of short RNA molecules used as primers for DNA polymerase during DNA replication. Also part of the exosome, which is a complex involved in RNA degradation. Acts as a poly(A)-binding protein that enhances the interaction between heteromeric, adenine-rich transcripts and the exosome. The sequence is that of DNA primase DnaG from Thermococcus kodakarensis (strain ATCC BAA-918 / JCM 12380 / KOD1) (Pyrococcus kodakaraensis (strain KOD1)).